The sequence spans 67 residues: ATP synthase F(0) complex subunit 8 (67 aa).

Residues 8–24 (TWSITIMSMIMTLFIVF) traverse the membrane as a helical segment. Residue Lys54 is modified to N6-acetyllysine; alternate. Position 54 is an N6-succinyllysine; alternate (Lys54). An N6-acetyllysine modification is found at Lys57.

It belongs to the ATPase protein 8 family. Component of the ATP synthase complex composed at least of ATP5F1A/subunit alpha, ATP5F1B/subunit beta, ATP5MC1/subunit c (homooctomer), MT-ATP6/subunit a, MT-ATP8/subunit 8, ATP5ME/subunit e, ATP5MF/subunit f, ATP5MG/subunit g, ATP5MK/subunit k, ATP5MJ/subunit j, ATP5F1C/subunit gamma, ATP5F1D/subunit delta, ATP5F1E/subunit epsilon, ATP5PF/subunit F6, ATP5PB/subunit b, ATP5PD/subunit d, ATP5PO/subunit OSCP. ATP synthase complex consists of a soluble F(1) head domain (subunits alpha(3) and beta(3)) - the catalytic core - and a membrane F(0) domain - the membrane proton channel (subunits c, a, 8, e, f, g, k and j). These two domains are linked by a central stalk (subunits gamma, delta, and epsilon) rotating inside the F1 region and a stationary peripheral stalk (subunits F6, b, d, and OSCP). Interacts with PRICKLE3.

It is found in the mitochondrion membrane. Its function is as follows. Subunit 8, of the mitochondrial membrane ATP synthase complex (F(1)F(0) ATP synthase or Complex V) that produces ATP from ADP in the presence of a proton gradient across the membrane which is generated by electron transport complexes of the respiratory chain. ATP synthase complex consist of a soluble F(1) head domain - the catalytic core - and a membrane F(1) domain - the membrane proton channel. These two domains are linked by a central stalk rotating inside the F(1) region and a stationary peripheral stalk. During catalysis, ATP synthesis in the catalytic domain of F(1) is coupled via a rotary mechanism of the central stalk subunits to proton translocation. In vivo, can only synthesize ATP although its ATP hydrolase activity can be activated artificially in vitro. Part of the complex F(0) domain. This Felis catus (Cat) protein is ATP synthase F(0) complex subunit 8.